The primary structure comprises 87 residues: Small ribosomal subunit protein uS17 (87 aa).

It belongs to the universal ribosomal protein uS17 family. As to quaternary structure, part of the 30S ribosomal subunit.

Its function is as follows. One of the primary rRNA binding proteins, it binds specifically to the 5'-end of 16S ribosomal RNA. The chain is Small ribosomal subunit protein uS17 from Geobacillus thermodenitrificans (strain NG80-2).